Consider the following 27-residue polypeptide: Histone H1.3, embryonic (27 aa).

Residues 1–27 (HVVAAITALKERGGSSHQALKKYKAAN) form the H15 domain.

It belongs to the histone H1/H5 family.

It is found in the nucleus. The protein localises to the chromosome. Functionally, histones H1 are necessary for the condensation of nucleosome chains into higher-order structures. The protein is Histone H1.3, embryonic of Parechinus angulosus (Angulate sea urchin).